We begin with the raw amino-acid sequence, 360 residues long: Phospho-N-acetylmuramoyl-pentapeptide-transferase (360 aa).

Transmembrane regions (helical) follow at residues 26–46, 72–92, 94–114, 132–152, 168–188, 199–219, 236–256, 263–283, 288–308, and 338–358; these read AIVSLLTALFISLWMGPRLIA, PTMGGIMILTSIVVSVLLWAY, SNPYVWCVLFVLVGYGAVGFV, WKYFWMSLIALTVAFALYITG, VMPQLGIFYVLLAYFVIVGTG, GLAIMPTVLVAGGFALVAWAT, AGELVIVCTAIVGAGLGFLWF, VFMGDVGSLALGGALGIIAVL, FLLVIMGGVFVVETLSVILQV, and VIVRFWVISLMLVLIGLATLK.

It belongs to the glycosyltransferase 4 family. MraY subfamily. It depends on Mg(2+) as a cofactor.

The protein resides in the cell inner membrane. It carries out the reaction UDP-N-acetyl-alpha-D-muramoyl-L-alanyl-gamma-D-glutamyl-meso-2,6-diaminopimeloyl-D-alanyl-D-alanine + di-trans,octa-cis-undecaprenyl phosphate = di-trans,octa-cis-undecaprenyl diphospho-N-acetyl-alpha-D-muramoyl-L-alanyl-D-glutamyl-meso-2,6-diaminopimeloyl-D-alanyl-D-alanine + UMP. The protein operates within cell wall biogenesis; peptidoglycan biosynthesis. Catalyzes the initial step of the lipid cycle reactions in the biosynthesis of the cell wall peptidoglycan: transfers peptidoglycan precursor phospho-MurNAc-pentapeptide from UDP-MurNAc-pentapeptide onto the lipid carrier undecaprenyl phosphate, yielding undecaprenyl-pyrophosphoryl-MurNAc-pentapeptide, known as lipid I. The protein is Phospho-N-acetylmuramoyl-pentapeptide-transferase of Cronobacter sakazakii (strain ATCC BAA-894) (Enterobacter sakazakii).